A 542-amino-acid chain; its full sequence is Chaperonin GroEL (542 aa).

ATP-binding positions include 29–32, Lys-50, 86–90, Gly-415, and Asp-495; these read TLGP and DGTTT.

Belongs to the chaperonin (HSP60) family. Forms a cylinder of 14 subunits composed of two heptameric rings stacked back-to-back. Interacts with the co-chaperonin GroES.

It localises to the cytoplasm. It carries out the reaction ATP + H2O + a folded polypeptide = ADP + phosphate + an unfolded polypeptide.. Together with its co-chaperonin GroES, plays an essential role in assisting protein folding. The GroEL-GroES system forms a nano-cage that allows encapsulation of the non-native substrate proteins and provides a physical environment optimized to promote and accelerate protein folding. The protein is Chaperonin GroEL of Flavobacterium psychrophilum (strain ATCC 49511 / DSM 21280 / CIP 103535 / JIP02/86).